The primary structure comprises 1018 residues: UPF0182 protein Tfu_0541 (1018 aa).

The next 7 membrane-spanning stretches (helical) occupy residues 20–40, 64–84, 115–135, 171–191, 212–232, 254–274, and 287–307; these read LAPV…AANF, ALLF…SVYF, VFFW…ATAE, VIIG…VVVH, VHLS…YWLE, AVLY…VLFF, and VSLG…PAIV. Disordered stretches follow at residues 497–570 and 939–965; these read YPVD…QANN and GDEA…ASSD. Acidic residues-rich tracts occupy residues 542 to 560 and 939 to 959; these read QDQE…EEEQ and GDEA…EEEQ.

It belongs to the UPF0182 family.

It localises to the cell membrane. In Thermobifida fusca (strain YX), this protein is UPF0182 protein Tfu_0541.